The chain runs to 336 residues: UDP-N-acetylenolpyruvoylglucosamine reductase (336 aa).

The FAD-binding PCMH-type domain maps to 1-178 (MAHSLQTLHT…TTVHLALPKE (178 aa)). Residue Arg154 is part of the active site. The Proton donor role is filled by Ser222. Glu318 is an active-site residue.

The protein belongs to the MurB family. Requires FAD as cofactor.

Its subcellular location is the cytoplasm. The catalysed reaction is UDP-N-acetyl-alpha-D-muramate + NADP(+) = UDP-N-acetyl-3-O-(1-carboxyvinyl)-alpha-D-glucosamine + NADPH + H(+). Its pathway is cell wall biogenesis; peptidoglycan biosynthesis. In terms of biological role, cell wall formation. The polypeptide is UDP-N-acetylenolpyruvoylglucosamine reductase (Pseudoalteromonas translucida (strain TAC 125)).